We begin with the raw amino-acid sequence, 600 residues long: Melanophilin (600 aa).

The region spanning 4–124 (KLDLSKLTDE…IGSLEWYYEH (121 aa)) is the RabBD domain. An FYVE-type zinc finger spans residues 64-107 (CARCLQPYQLLVNSKRQCLECGLFTCKSCGRVHPEEQGWICDPC). Disordered regions lie at residues 146-277 (QGGA…AELC), 390-465 (EELT…LSEL), 499-541 (TVKP…AKAM), and 553-600 (NSLK…AHQS). Basic and acidic residues-rich tracts occupy residues 232–243 (CSEKAAPHKAEG) and 409–420 (KDEKAEPNRDKS). Residues 373 to 496 (GVRTEADVEE…ESRIAALRAA (124 aa)) are a coiled coil. Over residues 558 to 569 (QGKDDDSFDRKS) the composition is skewed to basic and acidic residues.

Binds RAB27A that has been activated by GTP-binding via its N-terminus. Binds MYO5A via its C-terminal coiled coil domain.

The protein localises to the cytoplasm. In terms of biological role, rab effector protein involved in melanosome transport. Serves as link between melanosome-bound RAB27A and the motor protein MYO5A. This Homo sapiens (Human) protein is Melanophilin (MLPH).